The chain runs to 169 residues: Small ribosomal subunit protein uS5c (169 aa).

The S5 DRBM domain maps to 17–80 (WQERVVQIRR…ADGKKHVVEV (64 aa)).

Belongs to the universal ribosomal protein uS5 family. Part of the 30S ribosomal subunit. Contacts protein S4.

The protein localises to the plastid. It localises to the cyanelle. With S4 and S12 plays an important role in translational accuracy. In Cyanophora paradoxa, this protein is Small ribosomal subunit protein uS5c (rps5).